The following is a 353-amino-acid chain: MELTELLLVVMLLLTARLTLSSPAPPACDLRVLSKLLRDSHVLHSRLSQCPEVHPLPTPVLLPAVDFSLGEWKTQMEETKAQDILGAVTLLLEGVMAARGQLGPTCLSSLLGQLSGQVRLLLGALQSLLGTQLPPQGRTTAHKDPNAIFLSFQHLLRGKVRFLMLVGGSTLCVRRAPPTTAVPSRTSLVLTLNELPNRTSGLLETNFTASARTTGSGLLKWQQGFRAKIPGLLNQTSRSLDQIPGYLNRIHELLNGTRGLFPGPSRRTLGAPDISSGTSDTGSLPPNLQPGYSPSPTHPPTGQYTLFPLPPTLPTPVVQLHPLLPDPSAPTPTPTSPLLNTSYTHSQNLSQEG.

The first 21 residues, 1-21, serve as a signal peptide directing secretion; the sequence is MELTELLLVVMLLLTARLTLS. The O-linked (GalNAc...) serine glycan is linked to S22. Disulfide bonds link C28/C172 and C50/C106. T58, T131, T179, and T180 each carry an O-linked (GalNAc...) threonine glycan. O-linked (GalNAc...) serine glycosylation is present at S184. N-linked (GlcNAc...) (complex) asparagine glycans are attached at residues N197 and N206. O-linked (GalNAc...) threonine glycosylation occurs at T213. N-linked (GlcNAc...) (complex) asparagine glycans are attached at residues N234 and N255. The interval 257-353 is disordered; it reads TRGLFPGPSR…THSQNLSQEG (97 aa). Residue S265 is glycosylated (O-linked (GalNAc...) serine). The span at 275 to 304 shows a compositional bias: polar residues; it reads SSGTSDTGSLPPNLQPGYSPSPTHPPTGQY. Over residues 324–335 the composition is skewed to pro residues; it reads LPDPSAPTPTPT. N-linked (GlcNAc...) asparagine glycosylation is found at N340 and N348. Over residues 343 to 353 the composition is skewed to polar residues; it reads YTHSQNLSQEG.

This sequence belongs to the EPO/TPO family. Interacts with MPL/TPOR.

The protein resides in the secreted. In terms of biological role, lineage-specific cytokine affecting the proliferation and maturation of megakaryocytes from their committed progenitor cells. It acts at a late stage of megakaryocyte development. It may be the major physiological regulator of circulating platelets. The chain is Thrombopoietin (THPO) from Homo sapiens (Human).